We begin with the raw amino-acid sequence, 473 residues long: MAPQLLLCLIQTFLWSLPEAESNVFLKSNVANRFLQRTKRANSGFEEIYPANFERECVEERCSKEEAREVFEDDEKTEAFWTVYVDGDQCLSNPCHYGGTCKDGIGSYTCTCLAGYEGKNCEHDLLKSCRVDNGNCWHFCKPVQNDTQCSCAEGYRLGDNGFSCIAEGEFSCGRNIKSRNKREASLPDFQTDFSDDYDAIDENNLIETVQSQSATLLKKSDNPNPDIRIVNGLDCKLGECPWQAVLIDEKGTAFGGGTILSPYFVLTAAHCINKTKSIAVVVGQVDISRKETRRLLSVDKVYTHPKYVHVTNDYDIAIIQLKTPIQFSENVVPACLPTADFANHVLMKQDFGIVSGFGRIEEKGPTSNILKVVMVPYVDRHTCILSTKIPITRNMFCAGYGNQPEDACEGDSGGPHITAYKDTHFLTGIVSWGEGCGRDGKYGIYTKVSNFLPWIKTIMRRKQPSTESSTGRL.

Positions 1–20 (MAPQLLLCLIQTFLWSLPEA) are cleaved as a signal peptide. Positions 21–40 (ESNVFLKSNVANRFLQRTKR) are excised as a propeptide. A Gla domain is found at 41–86 (ANSGFEEIYPANFERECVEERCSKEEAREVFEDDEKTEAFWTVYVD). Glu-46, Glu-47, Glu-54, Glu-56, Glu-59, Glu-60, Glu-65, Glu-66, Glu-69, Glu-72, and Glu-75 each carry 4-carboxyglutamate. Cys-57 and Cys-62 are oxidised to a cystine. Positions 86 to 122 (DGDQCLSNPCHYGGTCKDGIGSYTCTCLAGYEGKNCE) constitute an EGF-like 1; calcium-binding domain. Cystine bridges form between Cys-90–Cys-101, Cys-95–Cys-110, Cys-112–Cys-121, Cys-129–Cys-140, Cys-136–Cys-149, Cys-151–Cys-164, Cys-172–Cys-335, Cys-235–Cys-240, Cys-383–Cys-397, and Cys-408–Cys-436. An O-linked (Hex...) serine glycan is attached at Ser-92. In terms of domain architecture, EGF-like 2 spans 129 to 164 (CRVDNGNCWHFCKPVQNDTQCSCAEGYRLGDNGFSC). A propeptide spans 182–228 (REASLPDFQTDFSDDYDAIDENNLIETVQSQSATLLKKSDNPNPDIR) (activation peptide). In terms of domain architecture, Peptidase S1 spans 229-460 (IVNGLDCKLG…FLPWIKTIMR (232 aa)). His-270 acts as the Charge relay system in catalysis. An N-linked (GlcNAc...) asparagine glycan is attached at Asn-273. The active-site Charge relay system is Asp-315. Ser-412 functions as the Charge relay system in the catalytic mechanism.

It belongs to the peptidase S1 family. Snake venom subfamily. Heterodimer of a light chain and a heavy chain; disulfide-linked. Post-translationally, the vitamin K-dependent, enzymatic carboxylation of some glutamate residues allows the modified protein to bind calcium. As to expression, expressed by the venom gland.

The protein localises to the secreted. It carries out the reaction Selective cleavage of Arg-|-Thr and then Arg-|-Ile bonds in prothrombin to form thrombin.. In terms of biological role, snake prothrombin activator that attacks the hemostatic system of prey. This protein is functionally similar to blood coagulation factor Xa. The protein is Venom prothrombin activator vestarin-D1 of Demansia vestigiata (Lesser black whip snake).